The following is a 347-amino-acid chain: Phosphoribosylformylglycinamidine cyclo-ligase (347 aa).

The protein belongs to the AIR synthase family.

It is found in the cytoplasm. The catalysed reaction is 2-formamido-N(1)-(5-O-phospho-beta-D-ribosyl)acetamidine + ATP = 5-amino-1-(5-phospho-beta-D-ribosyl)imidazole + ADP + phosphate + H(+). The protein operates within purine metabolism; IMP biosynthesis via de novo pathway; 5-amino-1-(5-phospho-D-ribosyl)imidazole from N(2)-formyl-N(1)-(5-phospho-D-ribosyl)glycinamide: step 2/2. The protein is Phosphoribosylformylglycinamidine cyclo-ligase of Yersinia pseudotuberculosis serotype IB (strain PB1/+).